Reading from the N-terminus, the 344-residue chain is Sulfate/thiosulfate import ATP-binding protein CysA (344 aa).

Residues 3–237 (IEVRNLVKKF…PATAFVHGFI (235 aa)) enclose the ABC transporter domain. Residue 35–42 (GPSGSGKT) participates in ATP binding.

This sequence belongs to the ABC transporter superfamily. Sulfate/tungstate importer (TC 3.A.1.6) family. The complex is composed of two ATP-binding proteins (CysA), two transmembrane proteins (CysT and CysW) and a solute-binding protein (CysP).

It localises to the cell inner membrane. The catalysed reaction is sulfate(out) + ATP + H2O = sulfate(in) + ADP + phosphate + H(+). It carries out the reaction thiosulfate(out) + ATP + H2O = thiosulfate(in) + ADP + phosphate + H(+). Its function is as follows. Part of the ABC transporter complex CysAWTP involved in sulfate/thiosulfate import. Responsible for energy coupling to the transport system. The protein is Sulfate/thiosulfate import ATP-binding protein CysA of Bradyrhizobium diazoefficiens (strain JCM 10833 / BCRC 13528 / IAM 13628 / NBRC 14792 / USDA 110).